The following is an 850-amino-acid chain: Bifunctional levopimaradiene synthase, chloroplastic (850 aa).

A chloroplast-targeting transit peptide spans 1 to 52 (MALPSSSLSSQIHTGATTQCIPHFHGSLNAGTSAGKRRSLYLRWGKGPSKIV). Substrate is bound at residue Lys-250. Residues Asp-383 and Asp-385 each contribute to the Mg(2+) site. The DXDD motif motif lies at 383-386 (DIDD). Residue Lys-470 coordinates substrate. The Mg(2+) site is built by Asp-602, Asp-606, Asn-746, Thr-750, and Glu-754. Positions 602 to 606 (DDLYD) match the DDXXD motif motif.

This sequence belongs to the terpene synthase family. Tpsd subfamily. Requires Mg(2+) as cofactor. Expressed in young tissues such as flushing buds and green bark tissues. Lower levels in mature needles and bark.

It is found in the plastid. It localises to the chloroplast. The enzyme catalyses (2E,6E,10E)-geranylgeranyl diphosphate = (+)-copalyl diphosphate. The catalysed reaction is (+)-copalyl diphosphate = abieta-8(14),12-diene + diphosphate. It carries out the reaction (+)-copalyl diphosphate = neoabietadiene + diphosphate. It participates in terpene metabolism; oleoresin biosynthesis. Functionally, involved in defensive oleoresin formation in conifers in response to insect attack or other injury. Involved in diterpene (C20) olefins biosynthesis. Bifunctional enzyme that catalyzes two sequential cyclizations of geranylgeranyl diphosphate (GGPP) to levopimaradiene. Levopimaradiene is the major products of the enzyme followed by abietadiene, neoabietadiene and palustradiene. No activity with geranyl diphosphate (GPP) or farnesyl diphosphate (FPP) as substrate. The polypeptide is Bifunctional levopimaradiene synthase, chloroplastic (LPS) (Pinus taeda (Loblolly pine)).